Consider the following 1024-residue polypeptide: Gamma-tubulin complex component 5 (1024 aa).

Disordered stretches follow at residues 155–203 and 521–545; these read IGPY…LDPC and TENE…SSRQ. A compositionally biased stretch (basic and acidic residues) spans 189–203; the sequence is TPLEEQDQNRKLDPC. Residues 531-543 are compositionally biased toward low complexity; it reads ASASSGSDQGPSS.

The protein belongs to the TUBGCP family. Component of the gamma-tubulin ring complex (gTuRC) consisting of TUBGCP2, TUBGCP3, TUBGCP4, TUBGCP5 and TUBGCP6 and gamma-tubulin TUBG1 or TUBG2. TUBGCP2, TUBGCP3, TUBGCP4, TUBGCP5 and TUBGCP6 assemble in a 5:5:2:1:1 stoichiometry; each is associated with a gamma-tubulin, thereby arranging 14 gamma-tubulins in a helical manner. Gamma-tubulin at the first position is blocked by TUBGCP3 at the last position, allowing 13 protafilaments to grow into a microtubule. The gTuRC (via TUBGCP3 and TUBGCP6) interacts with ACTB and MZT1; the interactions form a luminal bridge that stabilizes the initial structure during complex assembly. The gTuRC (via TUBGCP2) interacts with MZT2A/MZT2B and CDK5RAP2 (via CM1 motif); the interactions play a role in gTuRC activation. Widely expressed, with highest levels in heart and skeletal muscle and moderate levels in brain.

The protein localises to the cytoplasm. It localises to the cytoskeleton. It is found in the microtubule organizing center. Its subcellular location is the centrosome. Component of the gamma-tubulin ring complex (gTuRC) which mediates microtubule nucleation. The gTuRC regulates the minus-end nucleation of alpha-beta tubulin heterodimers that grow into microtubule protafilaments, a critical step in centrosome duplication and spindle formation. The sequence is that of Gamma-tubulin complex component 5 (TUBGCP5) from Homo sapiens (Human).